Reading from the N-terminus, the 132-residue chain is Large-conductance mechanosensitive channel (132 aa).

3 helical membrane-spanning segments follow: residues 14–34, 38–58, and 67–87; these read VVDL…VSSL, IITP…LHFG, and GNFI…FMFV.

This sequence belongs to the MscL family. In terms of assembly, homopentamer.

Its subcellular location is the cell membrane. Its function is as follows. Channel that opens in response to stretch forces in the membrane lipid bilayer. May participate in the regulation of osmotic pressure changes within the cell. The sequence is that of Large-conductance mechanosensitive channel from Bacillus cereus (strain B4264).